Here is a 704-residue protein sequence, read N- to C-terminus: Elongation factor G (704 aa).

In terms of domain architecture, tr-type G spans 10–286; the sequence is KKVRNIGIMA…AVIDFLPNPM (277 aa). GTP-binding positions include 19 to 26, 83 to 87, and 137 to 140; these read AHIDAGKT, DTPGH, and NKMD.

It belongs to the TRAFAC class translation factor GTPase superfamily. Classic translation factor GTPase family. EF-G/EF-2 subfamily.

The protein resides in the cytoplasm. Functionally, catalyzes the GTP-dependent ribosomal translocation step during translation elongation. During this step, the ribosome changes from the pre-translocational (PRE) to the post-translocational (POST) state as the newly formed A-site-bound peptidyl-tRNA and P-site-bound deacylated tRNA move to the P and E sites, respectively. Catalyzes the coordinated movement of the two tRNA molecules, the mRNA and conformational changes in the ribosome. The chain is Elongation factor G from Corynebacterium jeikeium (strain K411).